Reading from the N-terminus, the 242-residue chain is Type III pantothenate kinase (242 aa).

Position 7-14 (7-14 (DLGNSRFK)) interacts with ATP. Residues Tyr91 and 98-101 (GVDR) contribute to the substrate site. Asp100 serves as the catalytic Proton acceptor. Thr121 contacts ATP. Thr171 contacts substrate.

It belongs to the type III pantothenate kinase family. As to quaternary structure, homodimer. NH4(+) is required as a cofactor. K(+) serves as cofactor.

The protein localises to the cytoplasm. It catalyses the reaction (R)-pantothenate + ATP = (R)-4'-phosphopantothenate + ADP + H(+). It functions in the pathway cofactor biosynthesis; coenzyme A biosynthesis; CoA from (R)-pantothenate: step 1/5. In terms of biological role, catalyzes the phosphorylation of pantothenate (Pan), the first step in CoA biosynthesis. The polypeptide is Type III pantothenate kinase (Xanthomonas oryzae pv. oryzae (strain MAFF 311018)).